A 1227-amino-acid polypeptide reads, in one-letter code: Protein transport protein Sec31A (1227 aa).

WD repeat units follow at residues 4–47, 64–111, 120–160, 166–206, 209–254, 258–298, and 301–342; these read KEID…EIFE, SSAH…AGDT, KHTG…TPMT, QPLE…PIIK, DHNN…SPLR, SHTR…VLYE, and TNMQ…DGLR. The stretch at 397–430 is one WD 8; interaction with SEC13 repeat; that stretch reads SFSFGGKLVTFENAKPQQQPGIDQQPQHHYVYVS. 3 disordered regions span residues 804–875, 905–1008, and 1040–1075; these read EAIK…YSQA, QPVA…GWND, and ADPQ…LGPY. Residues 905–924 show a composition bias toward low complexity; sequence QPVAAPASASYPSPASNTNP. The segment covering 925-945 has biased composition (pro residues); sequence PYLPAAQPVPSPLYPGQPQPS. Residues 995 to 1006 are compositionally biased toward polar residues; that stretch reads PASQRTGPQNGW. Residues 1040-1049 show a composition bias toward low complexity; it reads ADPQAQMQQP. The span at 1057–1069 shows a compositional bias: polar residues; the sequence is PSFQPQQLSTGQQ.

The protein belongs to the WD repeat SEC31 family. COPII is composed of at least 5 proteins: the SEC23/24 complex, the SEC13/31 complex and SAR1. SEC13 and SEC31 make a 2:2 tetramer that forms the edge element of the COPII outer coat. The tetramer self-assembles in multiple copies to form the complete polyhedral cage. Interacts (via WD 8) with SEC13.

The protein resides in the cytoplasm. The protein localises to the cytoplasmic vesicle. It localises to the COPII-coated vesicle membrane. Its subcellular location is the endoplasmic reticulum membrane. Component of the coat protein complex II (COPII) which promotes the formation of transport vesicles from the endoplasmic reticulum (ER). The coat has two main functions, the physical deformation of the endoplasmic reticulum membrane into vesicles and the selection of cargo molecules. The protein is Protein transport protein Sec31A (SEC31A) of Gallus gallus (Chicken).